A 110-amino-acid polypeptide reads, in one-letter code: Phosphoribosyl-ATP pyrophosphatase (110 aa).

It belongs to the PRA-PH family.

It localises to the cytoplasm. The enzyme catalyses 1-(5-phospho-beta-D-ribosyl)-ATP + H2O = 1-(5-phospho-beta-D-ribosyl)-5'-AMP + diphosphate + H(+). It participates in amino-acid biosynthesis; L-histidine biosynthesis; L-histidine from 5-phospho-alpha-D-ribose 1-diphosphate: step 2/9. This Clostridium botulinum (strain Kyoto / Type A2) protein is Phosphoribosyl-ATP pyrophosphatase.